Reading from the N-terminus, the 130-residue chain is Small ribosomal subunit protein uS8 (130 aa).

Belongs to the universal ribosomal protein uS8 family. Part of the 30S ribosomal subunit. Contacts proteins S5 and S12.

Its function is as follows. One of the primary rRNA binding proteins, it binds directly to 16S rRNA central domain where it helps coordinate assembly of the platform of the 30S subunit. In Saccharophagus degradans (strain 2-40 / ATCC 43961 / DSM 17024), this protein is Small ribosomal subunit protein uS8.